The chain runs to 217 residues: MADHKLPRKEVAPRPDQTELRVGRLTKAHGLKGAIKLELFTDEPGKRFVPGAVFTLQVPTASKWHGKTLALRELRWYNGHPVGFFDGVDDRTEAESLVKAILWVNQDVRELPDEEDAWYDNQLVGLSAHRDGAVVGAIVRVDHLPGQDLLAIKTPGGEVLVPFVKAIVPEVDLAARTVTLTPPPGLFEDLPDDAPAAGDESEPVSPPVTAEETPGGE.

Residues glutamate 115 to leucine 186 form the PRC barrel domain. Residues threonine 181 to glutamate 217 form a disordered region.

This sequence belongs to the RimM family. In terms of assembly, binds ribosomal protein uS19.

The protein localises to the cytoplasm. Its function is as follows. An accessory protein needed during the final step in the assembly of 30S ribosomal subunit, possibly for assembly of the head region. Essential for efficient processing of 16S rRNA. May be needed both before and after RbfA during the maturation of 16S rRNA. It has affinity for free ribosomal 30S subunits but not for 70S ribosomes. The sequence is that of Ribosome maturation factor RimM from Leifsonia xyli subsp. xyli (strain CTCB07).